The sequence spans 207 residues: Ribonuclease HII (207 aa).

Positions 18–207 (TYLSGSDEAG…PIKKISKETS (190 aa)) constitute an RNase H type-2 domain. The a divalent metal cation site is built by Asp-24, Glu-25, and Asp-116.

The protein belongs to the RNase HII family. Mn(2+) serves as cofactor. It depends on Mg(2+) as a cofactor.

It is found in the cytoplasm. The enzyme catalyses Endonucleolytic cleavage to 5'-phosphomonoester.. Endonuclease that specifically degrades the RNA of RNA-DNA hybrids. The polypeptide is Ribonuclease HII (Mycoplasma capricolum subsp. capricolum (strain California kid / ATCC 27343 / NCTC 10154)).